Here is a 139-residue protein sequence, read N- to C-terminus: Large ribosomal subunit protein uL16c (139 aa).

Positions 1–17 (MLSPKKTKFRKQHRGRM) are enriched in basic residues. The disordered stretch occupies residues 1–23 (MLSPKKTKFRKQHRGRMKGSASK).

This sequence belongs to the universal ribosomal protein uL16 family. In terms of assembly, part of the 50S ribosomal subunit.

It is found in the plastid. The protein resides in the chloroplast. The chain is Large ribosomal subunit protein uL16c from Pyropia yezoensis (Susabi-nori).